A 317-amino-acid polypeptide reads, in one-letter code: Protein RTA1 (317 aa).

The Extracellular segment spans residues 1-16; it reads MAKDGFELYRYTPELG. Residues 17–37 form a helical membrane-spanning segment; it reads ASILFTVLFAVSGVAFVILLF. Over 38 to 64 the chain is Cytoplasmic; sequence HYSVKSKRRVGSLMKSQPVLRYYGTVN. A helical membrane pass occupies residues 65–85; that stretch reads LAGAYIPFIFGCFVECVGFAF. The Extracellular portion of the chain corresponds to 86 to 99; the sequence is RCKSSKDTTLLNPY. The chain crosses the membrane as a helical span at residues 100–120; it reads IIQTVFLLVSPTLYAASIYMI. Topologically, residues 121-142 are cytoplasmic; that stretch reads FGRMATLLFAENLMIMPARFNT. Residues 143–163 form a helical membrane-spanning segment; the sequence is TIFVIGDVGSLLLQAIGGAMM. The Extracellular segment spans residues 164 to 178; it reads SKVTSASSGSHLVTA. A helical transmembrane segment spans residues 179 to 199; that stretch reads GLFIQIAFFGLFIINEVLFIF. Over 200-214 the chain is Cytoplasmic; the sequence is KMSKKPTNVSVRYGS. Residues 215 to 235 form a helical membrane-spanning segment; that stretch reads WKYLNIALLVNSFLILIRSIV. The Extracellular portion of the chain corresponds to 236–259; that stretch reads RAVEFIQGYDGEIASHEWYLYIFD. A helical transmembrane segment spans residues 260–280; that stretch reads GLPMFLLVLIFIVAFPLINIF. Over 281 to 317 the chain is Cytoplasmic; it reads RIHEESIQAQQSARFDGTDYPDVEVTSIEEDLASKSE.

This sequence belongs to the lipid-translocating exporter (LTE) (TC 9.A.26.1) family.

Its subcellular location is the membrane. In terms of biological role, involved in 7-aminocholesterol resistance. The sequence is that of Protein RTA1 (RTA1) from Saccharomyces cerevisiae (strain ATCC 204508 / S288c) (Baker's yeast).